A 235-amino-acid chain; its full sequence is Glycerol-3-phosphate acyltransferase (235 aa).

Transmembrane regions (helical) follow at residues 4–24, 56–76, 90–110, 126–146, 152–172, and 191–211; these read LIVI…IIAG, AVTL…VVFF, VALR…TVFA, FGIA…TIFV, VASI…KYLF, and IHDS…FAII.

Belongs to the PlsY family. As to quaternary structure, probably interacts with PlsX.

It localises to the cell inner membrane. It carries out the reaction an acyl phosphate + sn-glycerol 3-phosphate = a 1-acyl-sn-glycero-3-phosphate + phosphate. It functions in the pathway lipid metabolism; phospholipid metabolism. Its function is as follows. Catalyzes the transfer of an acyl group from acyl-phosphate (acyl-PO(4)) to glycerol-3-phosphate (G3P) to form lysophosphatidic acid (LPA). This enzyme utilizes acyl-phosphate as fatty acyl donor, but not acyl-CoA or acyl-ACP. This Prosthecochloris aestuarii (strain DSM 271 / SK 413) protein is Glycerol-3-phosphate acyltransferase.